The sequence spans 320 residues: Acetyl-coenzyme A carboxylase carboxyl transferase subunit alpha (320 aa).

Residues 34–288 (RLEEALEAAR…GEALERVLAG (255 aa)) form the CoA carboxyltransferase C-terminal domain.

It belongs to the AccA family. In terms of assembly, acetyl-CoA carboxylase is a heterohexamer composed of biotin carboxyl carrier protein (AccB), biotin carboxylase (AccC) and two subunits each of ACCase subunit alpha (AccA) and ACCase subunit beta (AccD).

The protein resides in the cytoplasm. It carries out the reaction N(6)-carboxybiotinyl-L-lysyl-[protein] + acetyl-CoA = N(6)-biotinyl-L-lysyl-[protein] + malonyl-CoA. It functions in the pathway lipid metabolism; malonyl-CoA biosynthesis; malonyl-CoA from acetyl-CoA: step 1/1. Component of the acetyl coenzyme A carboxylase (ACC) complex. First, biotin carboxylase catalyzes the carboxylation of biotin on its carrier protein (BCCP) and then the CO(2) group is transferred by the carboxyltransferase to acetyl-CoA to form malonyl-CoA. The chain is Acetyl-coenzyme A carboxylase carboxyl transferase subunit alpha from Rubrobacter xylanophilus (strain DSM 9941 / JCM 11954 / NBRC 16129 / PRD-1).